The sequence spans 99 residues: Aspartyl/glutamyl-tRNA(Asn/Gln) amidotransferase subunit C (99 aa).

Belongs to the GatC family. Heterotrimer of A, B and C subunits.

The enzyme catalyses L-glutamyl-tRNA(Gln) + L-glutamine + ATP + H2O = L-glutaminyl-tRNA(Gln) + L-glutamate + ADP + phosphate + H(+). The catalysed reaction is L-aspartyl-tRNA(Asn) + L-glutamine + ATP + H2O = L-asparaginyl-tRNA(Asn) + L-glutamate + ADP + phosphate + 2 H(+). Its function is as follows. Allows the formation of correctly charged Asn-tRNA(Asn) or Gln-tRNA(Gln) through the transamidation of misacylated Asp-tRNA(Asn) or Glu-tRNA(Gln) in organisms which lack either or both of asparaginyl-tRNA or glutaminyl-tRNA synthetases. The reaction takes place in the presence of glutamine and ATP through an activated phospho-Asp-tRNA(Asn) or phospho-Glu-tRNA(Gln). This is Aspartyl/glutamyl-tRNA(Asn/Gln) amidotransferase subunit C from Mycobacterium leprae (strain Br4923).